Consider the following 296-residue polypeptide: Ribonuclease HIII (296 aa).

An RNase H type-2 domain is found at 81-296; it reads QAMIGTDEVG…TQKAKQLLER (216 aa). Residues D87, E88, and D190 each coordinate a divalent metal cation.

The protein belongs to the RNase HII family. RnhC subfamily. It depends on Mn(2+) as a cofactor. Mg(2+) is required as a cofactor.

It localises to the cytoplasm. The enzyme catalyses Endonucleolytic cleavage to 5'-phosphomonoester.. Functionally, endonuclease that specifically degrades the RNA of RNA-DNA hybrids. The sequence is that of Ribonuclease HIII from Streptococcus gordonii (strain Challis / ATCC 35105 / BCRC 15272 / CH1 / DL1 / V288).